The chain runs to 520 residues: Laccase-1 (520 aa).

A signal peptide spans 1-21 (MSRFHSLLAFVVASLTAVAHA). Plastocyanin-like domains lie at 23-148 (IGPV…FVVY) and 160-302 (VDND…ILRY). N-linked (GlcNAc...) asparagine glycosylation is found at Asn72 and Asn75. Positions 85, 87, 130, and 132 each coordinate Cu cation. 2 cysteine pairs are disulfide-bonded: Cys106/Cys509 and Cys138/Cys226. Asn229, Asn238, Asn354, and Asn361 each carry an N-linked (GlcNAc...) asparagine glycan. A Plastocyanin-like 3 domain is found at 369–491 (TVPVLLQIIS…AGFAVVFAED (123 aa)). Residues His416, His419, His421, His473, Cys474, His475, and His479 each contribute to the Cu cation site.

The protein belongs to the multicopper oxidase family. As to quaternary structure, homodimer. The cofactor is Cu cation.

The protein localises to the secreted. It catalyses the reaction 4 hydroquinone + O2 = 4 benzosemiquinone + 2 H2O. Functionally, lignin degradation and detoxification of lignin-derived products. The sequence is that of Laccase-1 from Trametes villosa (White-rot fungus).